The sequence spans 155 residues: Putative pre-16S rRNA nuclease (155 aa).

The tract at residues 136 to 155 (DAERATSRPPGHPVEPRIGP) is disordered.

The protein belongs to the YqgF nuclease family.

The protein localises to the cytoplasm. Its function is as follows. Could be a nuclease involved in processing of the 5'-end of pre-16S rRNA. The polypeptide is Putative pre-16S rRNA nuclease (Leifsonia xyli subsp. xyli (strain CTCB07)).